The following is an 82-amino-acid chain: ATP synthase subunit c, chloroplastic (82 aa).

M1 carries the post-translational modification N-formylmethionine. The next 2 helical transmembrane spans lie at 3–23 (PIVA…AAIG) and 57–77 (FAFM…LLFA).

It belongs to the ATPase C chain family. As to quaternary structure, F-type ATPases have 2 components, F(1) - the catalytic core - and F(0) - the membrane proton channel. F(1) has five subunits: alpha(3), beta(3), gamma(1), delta(1), epsilon(1). F(0) has four main subunits: a(1), b(1), b'(1) and c(10-14). The alpha and beta chains form an alternating ring which encloses part of the gamma chain. F(1) is attached to F(0) by a central stalk formed by the gamma and epsilon chains, while a peripheral stalk is formed by the delta, b and b' chains.

The protein resides in the plastid. It is found in the chloroplast thylakoid membrane. Its function is as follows. F(1)F(0) ATP synthase produces ATP from ADP in the presence of a proton or sodium gradient. F-type ATPases consist of two structural domains, F(1) containing the extramembraneous catalytic core and F(0) containing the membrane proton channel, linked together by a central stalk and a peripheral stalk. During catalysis, ATP synthesis in the catalytic domain of F(1) is coupled via a rotary mechanism of the central stalk subunits to proton translocation. Functionally, key component of the F(0) channel; it plays a direct role in translocation across the membrane. A homomeric c-ring of between 10-14 subunits forms the central stalk rotor element with the F(1) delta and epsilon subunits. The sequence is that of ATP synthase subunit c, chloroplastic from Chlamydomonas reinhardtii (Chlamydomonas smithii).